Consider the following 216-residue polypeptide: Uracil phosphoribosyltransferase (216 aa).

5-phospho-alpha-D-ribose 1-diphosphate is bound by residues arginine 85, arginine 110, and 135–143; that span reads DPMVATGYS. Residues isoleucine 200 and 205–207 contribute to the uracil site; that span reads GDA. Aspartate 206 is a binding site for 5-phospho-alpha-D-ribose 1-diphosphate.

This sequence belongs to the UPRTase family. Requires Mg(2+) as cofactor.

The catalysed reaction is UMP + diphosphate = 5-phospho-alpha-D-ribose 1-diphosphate + uracil. It functions in the pathway pyrimidine metabolism; UMP biosynthesis via salvage pathway; UMP from uracil: step 1/1. Its activity is regulated as follows. Allosterically activated by GTP. In terms of biological role, catalyzes the conversion of uracil and 5-phospho-alpha-D-ribose 1-diphosphate (PRPP) to UMP and diphosphate. The polypeptide is Uracil phosphoribosyltransferase (Burkholderia pseudomallei (strain 668)).